We begin with the raw amino-acid sequence, 175 residues long: Adenine phosphoribosyltransferase (175 aa).

It belongs to the purine/pyrimidine phosphoribosyltransferase family. In terms of assembly, homodimer.

It localises to the cytoplasm. The catalysed reaction is AMP + diphosphate = 5-phospho-alpha-D-ribose 1-diphosphate + adenine. The protein operates within purine metabolism; AMP biosynthesis via salvage pathway; AMP from adenine: step 1/1. Functionally, catalyzes a salvage reaction resulting in the formation of AMP, that is energically less costly than de novo synthesis. In Nitrosospira multiformis (strain ATCC 25196 / NCIMB 11849 / C 71), this protein is Adenine phosphoribosyltransferase.